The following is a 170-amino-acid chain: Large ribosomal subunit protein bL17 (170 aa).

Residues 124-134 show a composition bias toward low complexity; sequence AAEAPKAAKAA. The disordered stretch occupies residues 124–170; it reads AAEAPKAAKAAPVKEAKPAAEEAPAKPKRTRKPKADEADAEAAKEEN. Composition is skewed to basic and acidic residues over residues 135 to 148 and 156 to 170; these read PVKEAKPAAEEAPA and PKADEADAEAAKEEN.

This sequence belongs to the bacterial ribosomal protein bL17 family. In terms of assembly, part of the 50S ribosomal subunit. Contacts protein L32.

The protein is Large ribosomal subunit protein bL17 of Desulfovibrio desulfuricans (strain ATCC 27774 / DSM 6949 / MB).